A 401-amino-acid chain; its full sequence is Nicotinate phosphoribosyltransferase (401 aa).

His-224 carries the phosphohistidine; by autocatalysis modification.

The protein belongs to the NAPRTase family. Transiently phosphorylated on a His residue during the reaction cycle. Phosphorylation strongly increases the affinity for substrates and increases the rate of nicotinate D-ribonucleotide production. Dephosphorylation regenerates the low-affinity form of the enzyme, leading to product release.

It carries out the reaction nicotinate + 5-phospho-alpha-D-ribose 1-diphosphate + ATP + H2O = nicotinate beta-D-ribonucleotide + ADP + phosphate + diphosphate. Its pathway is cofactor biosynthesis; NAD(+) biosynthesis; nicotinate D-ribonucleotide from nicotinate: step 1/1. In terms of biological role, catalyzes the synthesis of beta-nicotinate D-ribonucleotide from nicotinate and 5-phospho-D-ribose 1-phosphate at the expense of ATP. This chain is Nicotinate phosphoribosyltransferase, found in Pseudomonas putida (strain GB-1).